The sequence spans 334 residues: Ferrochelatase (334 aa).

Fe cation contacts are provided by His207 and Glu288.

It belongs to the ferrochelatase family.

It is found in the cytoplasm. It catalyses the reaction heme b + 2 H(+) = protoporphyrin IX + Fe(2+). Its pathway is porphyrin-containing compound metabolism; protoheme biosynthesis; protoheme from protoporphyrin-IX: step 1/1. Catalyzes the ferrous insertion into protoporphyrin IX. The polypeptide is Ferrochelatase (Helicobacter pylori (strain ATCC 700392 / 26695) (Campylobacter pylori)).